A 569-amino-acid chain; its full sequence is Endonuclease/exonuclease/phosphatase family domain-containing protein 1 (569 aa).

The disordered stretch occupies residues 1 to 20; sequence MGSTLGCHRSIPRDPSDLSH. Glycine 2 carries N-myristoyl glycine lipidation. Over residues 11–20 the composition is skewed to basic and acidic residues; the sequence is IPRDPSDLSH. Serine 16, serine 21, and serine 25 each carry phosphoserine. Positions 38–67 constitute a HhH domain; sequence ERLNINTATEEELMTLPGVTRAVARSIVEY. Phosphoserine occurs at positions 106, 110, 160, and 173. A disordered region spans residues 200–224; sequence SRPPSTHTNGGLTFTAKPHPSPTSL. Over residues 202–211 the composition is skewed to polar residues; it reads PPSTHTNGGL. At threonine 265 the chain carries Phosphothreonine. Positions 548-569 are disordered; that stretch reads EVPRNGNGVTLEPSEANVKHER.

This chain is Endonuclease/exonuclease/phosphatase family domain-containing protein 1 (Eepd1), found in Rattus norvegicus (Rat).